A 363-amino-acid chain; its full sequence is tRNA-specific 2-thiouridylase MnmA (363 aa).

ATP-binding positions include 6-13 (AMSGGVDS) and leucine 32. The active-site Nucleophile is the cysteine 101. Cysteine 101 and cysteine 193 form a disulfide bridge. Residue glycine 125 participates in ATP binding. Positions 143-145 (KDQ) are interaction with tRNA. The Cysteine persulfide intermediate role is filled by cysteine 193.

Belongs to the MnmA/TRMU family.

It is found in the cytoplasm. The enzyme catalyses S-sulfanyl-L-cysteinyl-[protein] + uridine(34) in tRNA + AH2 + ATP = 2-thiouridine(34) in tRNA + L-cysteinyl-[protein] + A + AMP + diphosphate + H(+). Its function is as follows. Catalyzes the 2-thiolation of uridine at the wobble position (U34) of tRNA, leading to the formation of s(2)U34. The chain is tRNA-specific 2-thiouridylase MnmA from Mycobacterium marinum (strain ATCC BAA-535 / M).